Reading from the N-terminus, the 221-residue chain is ATP-dependent Clp protease proteolytic subunit 1, mitochondrial (221 aa).

Residues 1 to 25 (MLRRLVTSSLSASRSMSASVQSRVG) constitute a mitochondrion transit peptide. Serine 120 serves as the catalytic Nucleophile. Histidine 145 is a catalytic residue.

Belongs to the peptidase S14 family. As to quaternary structure, tetradecamer that assembles into a two heptameric rings with a central cavity. As to expression, expressed in the intestine.

The protein resides in the mitochondrion matrix. The enzyme catalyses Hydrolysis of proteins to small peptides in the presence of ATP and magnesium. alpha-casein is the usual test substrate. In the absence of ATP, only oligopeptides shorter than five residues are hydrolyzed (such as succinyl-Leu-Tyr-|-NHMec, and Leu-Tyr-Leu-|-Tyr-Trp, in which cleavage of the -Tyr-|-Leu- and -Tyr-|-Trp bonds also occurs).. In terms of biological role, clp cleaves peptides in various proteins in a process that requires ATP hydrolysis. Clp may be responsible for a fairly general and central housekeeping function rather than for the degradation of specific substrates. The protein is ATP-dependent Clp protease proteolytic subunit 1, mitochondrial (clpp-1) of Caenorhabditis elegans.